Reading from the N-terminus, the 1833-residue chain is Protein TIC 214 (1833 aa).

The next 6 helical transmembrane spans lie at 18 to 38 (IINS…FSIG), 67 to 87 (FIMG…HLAL), 90 to 110 (PHTI…WNNH), 127 to 147 (LSIQ…YFIL), 175 to 195 (VGWL…LVWI), and 218 to 238 (IFSI…PSPI). The segment at 254–301 (EETNLEIEKTSETKETKQEEEGFTEEDPSPSLFSEEKEDPDKIDETEK) is disordered. Basic and acidic residues-rich tracts occupy residues 259-273 (EIEK…KQEE) and 292-301 (DPDKIDETEK).

This sequence belongs to the TIC214 family. Part of the Tic complex.

Its subcellular location is the plastid. It localises to the chloroplast inner membrane. In terms of biological role, involved in protein precursor import into chloroplasts. May be part of an intermediate translocation complex acting as a protein-conducting channel at the inner envelope. This Spinacia oleracea (Spinach) protein is Protein TIC 214.